The following is a 491-amino-acid chain: Zinc finger protein 655 (491 aa).

The segment at 1–52 (MEEIPAQEAAGSPRVQFQSLETQSECLSPEPQFVQDTDMEQGLTGDGETREE) is disordered. The segment covering 15–26 (VQFQSLETQSEC) has biased composition (polar residues). The residue at position 60 (Q60) is a Phosphoserine. Residues K77, K190, and K201 each participate in a glycyl lysine isopeptide (Lys-Gly) (interchain with G-Cter in SUMO2) cross-link. 6 C2H2-type zinc fingers span residues 212–234 (YKCD…QRIH), 240–262 (YKCK…KRIH), 303–325 (YKCS…QKIH), 330–353 (CKCT…RVHH), 380–402 (YTCS…QRIH), and 408–430 (HECN…HKMH).

The protein belongs to the krueppel C2H2-type zinc-finger protein family. As to quaternary structure, interacts with VAV1 and CDK4. Interacts with INTS13; promoting association with the integrator complex.

It is found in the nucleus. Probable transcription factor. This chain is Zinc finger protein 655, found in Homo sapiens (Human).